A 256-amino-acid polypeptide reads, in one-letter code: tRNA (guanine-N(7)-)-methyltransferase (256 aa).

Residues 1 to 25 form a disordered region; the sequence is MVATGGQAQDQSQNQEPDVLNPTSA. S-adenosyl-L-methionine contacts are provided by residues Gly-79, 102-103, 137-138, and Leu-157; these read EI and NA. Asp-160 is a catalytic residue. 235–237 contributes to the S-adenosyl-L-methionine binding site; sequence SEE.

Belongs to the class I-like SAM-binding methyltransferase superfamily. TrmB family.

It localises to the nucleus. It catalyses the reaction guanosine(46) in tRNA + S-adenosyl-L-methionine = N(7)-methylguanosine(46) in tRNA + S-adenosyl-L-homocysteine. Its pathway is tRNA modification; N(7)-methylguanine-tRNA biosynthesis. In terms of biological role, catalyzes the formation of N(7)-methylguanine at position 46 (m7G46) in tRNA. This chain is tRNA (guanine-N(7)-)-methyltransferase, found in Drosophila simulans (Fruit fly).